Here is a 65-residue protein sequence, read N- to C-terminus: Photosystem II reaction center protein J (65 aa).

Residues 1–17 show a composition bias toward basic and acidic residues; that stretch reads MSTKLKGPDGRIPDRLP. The tract at residues 1 to 21 is disordered; sequence MSTKLKGPDGRIPDRLPDGSP. The helical transmembrane segment at 36-56 threads the bilayer; sequence LWLVATVGGMAVLSVLGLFFF.

Belongs to the PsbJ family. PSII is composed of 1 copy each of membrane proteins PsbA, PsbB, PsbC, PsbD, PsbE, PsbF, PsbH, PsbI, PsbJ, PsbK, PsbL, PsbM, PsbT, PsbX, PsbY, Psb30/Ycf12, peripheral proteins PsbO, CyanoQ (PsbQ), PsbU, PsbV and a large number of cofactors. It forms dimeric complexes.

The protein localises to the cellular thylakoid membrane. Its function is as follows. One of the components of the core complex of photosystem II (PSII). PSII is a light-driven water:plastoquinone oxidoreductase that uses light energy to abstract electrons from H(2)O, generating O(2) and a proton gradient subsequently used for ATP formation. It consists of a core antenna complex that captures photons, and an electron transfer chain that converts photonic excitation into a charge separation. The protein is Photosystem II reaction center protein J of Prochlorococcus marinus (strain MIT 9313).